The chain runs to 282 residues: Undecaprenyl-diphosphatase (282 aa).

The next 7 helical transmembrane spans lie at 40-60 (GAAF…IYFF), 85-105 (AKMG…GLLF), 117-137 (YWIS…EWLI), 158-178 (ALII…RSGV), 193-213 (AARF…IYQL), 231-251 (IVAT…LITF), and 258-278 (AVFI…IATG).

This sequence belongs to the UppP family.

The protein resides in the cell inner membrane. The catalysed reaction is di-trans,octa-cis-undecaprenyl diphosphate + H2O = di-trans,octa-cis-undecaprenyl phosphate + phosphate + H(+). Catalyzes the dephosphorylation of undecaprenyl diphosphate (UPP). Confers resistance to bacitracin. The protein is Undecaprenyl-diphosphatase of Prosthecochloris aestuarii (strain DSM 271 / SK 413).